The chain runs to 494 residues: DNA-directed DNA/RNA polymerase mu (494 aa).

A disordered region spans residues 1-24; that stretch reads MLPKRRRARVGSPSGDAASSTPPS. Position 12 is a phosphoserine (Ser12). The BRCT domain maps to 22 to 122; it reads PPSTRFPGVA…QPVPVECRHR (101 aa). Residues 323–332 form an involved in ssDNA binding region; that stretch reads RGKLQGHDVD. The Mg(2+) site is built by Asp330, Asp332, and Asp418.

The protein belongs to the DNA polymerase type-X family. Mg(2+) is required as a cofactor. In terms of tissue distribution, expressed in a number of tissues. Abundant in thymus.

It localises to the nucleus. It carries out the reaction DNA(n) + a 2'-deoxyribonucleoside 5'-triphosphate = DNA(n+1) + diphosphate. Gap-filling polymerase involved in repair of DNA double-strand breaks by non-homologous end joining (NHEJ). Participates in immunoglobulin (Ig) light chain gene rearrangement in V(D)J recombination. The protein is DNA-directed DNA/RNA polymerase mu (POLM) of Homo sapiens (Human).